Reading from the N-terminus, the 168-residue chain is Nuclear cap-binding protein subunit 2 (168 aa).

Residues tyrosine 23, tyrosine 46, 115 to 119 (RTDWD), 126 to 130 (RQYGR), and 136 to 137 (QV) each bind mRNA. An RRM domain is found at 43–121 (STLYVGNLSF…RIVRTDWDAG (79 aa)).

Belongs to the RRM NCBP2 family. As to quaternary structure, component of the nuclear cap-binding complex (CBC), a heterodimer composed of NCBP1/CBP80 and NCBP2/CBP20 that interacts with m7GpppG-capped RNA.

Its subcellular location is the nucleus. The protein resides in the cytoplasm. Component of the cap-binding complex (CBC), which binds co-transcriptionally to the 5' cap of pre-mRNAs and is involved in various processes such as pre-mRNA splicing, translation regulation, nonsense-mediated mRNA decay, RNA-mediated gene silencing (RNAi) by microRNAs (miRNAs) and mRNA export. The CBC complex is involved in mRNA export from the nucleus, leading to the recruitment of the mRNA export machinery to the 5' end of mRNA and to mRNA export in a 5' to 3' direction through the nuclear pore. The CBC complex is also involved in mediating U snRNA and intronless mRNAs export from the nucleus. The CBC complex is essential for a pioneer round of mRNA translation, before steady state translation when the CBC complex is replaced by cytoplasmic cap-binding protein eIF4E. The pioneer round of mRNA translation mediated by the CBC complex plays a central role in nonsense-mediated mRNA decay (NMD), NMD only taking place in mRNAs bound to the CBC complex, but not on eIF4E-bound mRNAs. The CBC complex enhances NMD in mRNAs containing at least one exon-junction complex (EJC), promoting the interaction between UPF1 and UPF2. The CBC complex is also involved in 'failsafe' NMD, which is independent of the EJC complex, while it does not participate in Staufen-mediated mRNA decay (SMD). During cell proliferation, the CBC complex is also involved in microRNAs (miRNAs) biogenesis via its interaction with SRRT/ARS2, thereby being required for miRNA-mediated RNA interference. The CBC complex also acts as a negative regulator of PARN, thereby acting as an inhibitor of mRNA deadenylation. In the CBC complex, NCBP2/CBP20 recognizes and binds capped RNAs (m7GpppG-capped RNA) but requires NCBP1/CBP80 to stabilize the movement of its N-terminal loop and lock the CBC into a high affinity cap-binding state with the cap structure. The conventional cap-binding complex with NCBP2 binds both small nuclear RNA (snRNA) and messenger (mRNA) and is involved in their export from the nucleus. The chain is Nuclear cap-binding protein subunit 2 (NCBP2) from Gallus gallus (Chicken).